The sequence spans 613 residues: Dihydroxy-acid dehydratase (613 aa).

Aspartate 81 provides a ligand contact to Mg(2+). Cysteine 122 contacts [2Fe-2S] cluster. Positions 123 and 124 each coordinate Mg(2+). Lysine 124 is modified (N6-carboxylysine). Cysteine 193 serves as a coordination point for [2Fe-2S] cluster. Residue glutamate 489 participates in Mg(2+) binding. The active-site Proton acceptor is serine 515.

The protein belongs to the IlvD/Edd family. As to quaternary structure, homodimer. Requires [2Fe-2S] cluster as cofactor. The cofactor is Mg(2+).

The enzyme catalyses (2R)-2,3-dihydroxy-3-methylbutanoate = 3-methyl-2-oxobutanoate + H2O. The catalysed reaction is (2R,3R)-2,3-dihydroxy-3-methylpentanoate = (S)-3-methyl-2-oxopentanoate + H2O. It participates in amino-acid biosynthesis; L-isoleucine biosynthesis; L-isoleucine from 2-oxobutanoate: step 3/4. It functions in the pathway amino-acid biosynthesis; L-valine biosynthesis; L-valine from pyruvate: step 3/4. Functionally, functions in the biosynthesis of branched-chain amino acids. Catalyzes the dehydration of (2R,3R)-2,3-dihydroxy-3-methylpentanoate (2,3-dihydroxy-3-methylvalerate) into 2-oxo-3-methylpentanoate (2-oxo-3-methylvalerate) and of (2R)-2,3-dihydroxy-3-methylbutanoate (2,3-dihydroxyisovalerate) into 2-oxo-3-methylbutanoate (2-oxoisovalerate), the penultimate precursor to L-isoleucine and L-valine, respectively. This Pseudomonas fluorescens (strain ATCC BAA-477 / NRRL B-23932 / Pf-5) protein is Dihydroxy-acid dehydratase.